The chain runs to 3462 residues: MVQQSTTVAEAQGNEQKANNVDAAMDKLRQSIADNATTKQNQNYTDASQNKKDAYNNAVTTAQGIIDQTTSPTLDPTVINQAAGQVSTTKNALNGNENLEAAKQQASQSLGSLDNLNNAQKQTVTDQINGAHTVDEANQIKQNAQNLNTAMGNLKQAIADKDATKATVNFTDADQAKQQAYNTAVTNAENIISKANGGNATQAEVEQAIKQVNAAKQALNGNANVQHAKDEATALINSSNDLNQAQKDALKQQVQNATTVAGVNNVKQTAQELNNAMTQLKQGIADKEQTKADGNFVNADPDKQNAYNQAVAKAEALISATPDVVVTPSEITAALNKVTQAKNDLNGNTNLATAKQNVQHAIDQLPNLNQAQRDEYSKQITQATLVPNVNAIQQAATTLNDAMTQLKQGIANKAQIKGSENYHDADTDKQTAYDNAVTKAEELLKQTTNPTMDPNTIQQALTKVNDTNQALNGNQKLADAKQDAKTTLGTLDHLNDAQKQALTTQVEQAPDIATVNNVKQNAQNLNNAMTNLNNALQDKTETLNSINFTDADQAKKDAYTNAVSHAEGILSKANGSNASQTEVEQAMQRVNEAKQALNGNDNVQRAKDAAKQVITNANDLNQAQKDALKQQVDAAQTVANVNTIKQTAQDLNQAMTQLKQGIADKDQTKASGNFVNADTDKQNAYNNAVAHAEQIISGTPNANVDPQQVAQALQQVNQAKGDLNGNHNLQVAKDNANTAIDQLPNLNQPQKTALKDQVSHAELVTGVNAIKQNADALNNAMGTLKQQIQANSQVPQSVDFTQADQDKQQAYNNAANQAQQIANGIPTPVLTPDTVTQAVTTMNQAKDALNGDEKLAQAKQEALANLDTLRDLNQPQRDALRNQINQAQALATVEQTKQNAQNVNTAMSNLKQGIANKDTVKASENYHDADADKQTAYTNAVSQAEGIINQTTNPTLNPDEITRALTQVTDAKNGLNGEAKLATEKQNAKDAVSGMTHLNDAQKQALKGQIDQSPEIATVNQVKQTATSLDQAMDQLSQAINDKAQTLADGNYLNADPDKQNAYKQAVAKAEALLNKQSGTNEVQAQVESITNEVNAAKQALNGNDNLANAKQQAKQQLANLTHLNDAQKQSFESQITQAPLVTDVTTINQKAQTLDHAMELLRNSVADNQTTLASEDYHDATAQRQNDYNQAVTAANNIINQTTSPTMNPDDVNGATTQVNNTKVALDGDENLAAAKQQANNRLDQLDHLNNAQKQQLQSQITQSSDIAAVNGHKQTAESLNTAMGNLINAIADHQAVEQRGNFINADTDKQTAYNTAVNEAAAMINKQTGQNANQTEVEQAITKVQTTLQALNGDHNLQVAKTNATQAIDALTSLNDPQKTALKDQVTAATLVTAVHQIEQNANTLNQAMHGLRQSIQDNAATKANSKYINEDQPEQQNYDQAVQAANNIINEQTATLDNNAINQAATTVNTTKAALHGDVKLQNDKDHAKQTVSQLAHLNNAQKHMEDTLIDSETTRTAVKQDLTEAQALDQLMDALQQSIADKDATRASSAYVNAEPNKKQSYDEAVQNAESIIAGLNNPTINKGNVSSATQAVISSKNALDGVERLAQDKQTAGNSLNHLDQLTPAQQQALENQINNATTRGEVAQKLTEAQALNQAMEALRNSIQDQQQTEAGSKFINEDKPQKDAYQAAVQNAKDLINQTNNPTLDKAQVEQLTQAVNQAKDNLHGDQKLADDKQHAVTDLNQLNGLNNPQRQALESQINNAATRGEVAQKLAEAKALDQAMQALRNSIQDQQQTESGSKFINEDKPQKDAYQAAVQNAKDLINQTGNPTLDKSQVEQLTQAVTTAKDNLHGDQKLARDQQQAVTTVNALPNLNHAQQQALTDAINAAPTRTEVAQHVQTATELDHAMETLKNKVDQVNTDKAQPNYTEASTDKKEAVDQALQAAESITDPTNGSNANKDAVDQVLTKLQEKENELNGNERVAEAKTQAKQTIDQLTHLNADQIATAKQNIDQATKLQPIAELVDQATQLNQSMDQLQQAVNEHANVEQTVDYTQADSDKQNAYKQAIADAENVLKQNANKQQVDQALQNILNAKQALNGDERVALAKTNGKHDIDQLNALNNAQQDGFKGRIDQSNDLNQIQQIVDEAKALNRAMDQLSQEITDNEGRTKGSTNYVNADTQVKQVYDETVDKAKQALDKSTGQNLTAKQVIKLNDAVTAAKKALNGEERLNNRKAEALQRLDQLTHLNNAQRQLAIQQINNAETLNKASRAINRATKLDNAMGAVQQYIDEQHLGVISSTNYINADDNLKANYDNAIANAAHELDKVQGNAIAKAEAEQLKQNIIDAQNALNGDQNLANAKDKANAFVNSLNGLNQQQQDLAHKAINNADTVSDVTDIVNNQIDLNDAMETLKHLVDNEIPNAEQTVNYQNADDNAKTNFDDAKRLANTLLNSDNTNVNDINGAIQAVNDAIHNLNGDQRLQDAKDKAIQSINQALANKLKEIEASNATDQDKLIAKNKAEELANSIINNINKATSNQAVSQVQTAGNHAIEQVHANEIPKAKIDANKDVDKQVQALIDEIDRNPNLTDKEKQALKDRINQILQQGHNGINNAMTKEEIEQAKAQLAQALQDIKDLVKAKEDAKQDVDKQVQALIDEIDQNPNLTDKEKQALKDRINQILQQGHNDINNAMTKEAIEQAKERLAQALQDIKDLVKAKEDAKNDIDKRVQALIDEIDQNPNLTDKEKQALKDRINQILQQGHNDINNALTKEEIEQAKAQLAQALQDIKDLVKAKEDAKNAIKALANAKRDQINSNPDLTPEQKAKALKEIDEAEKRALQNVENAQTIDQLNRGLNLGLDDIRNTHVWEVDEQPAVNEIFEATPEQILVNGELIVHRDDIITEQDILAHINLIDQLSAEVIDTPSTATISDSLTAKVEVTLLDGSKVIVNVPVKVVEKELSVVKQQAIESIENAAQQKINEINNSVTLTLEQKEAAIAEVNKLKQQAIDHVNNAPDVHSVEEIQQQEQAHIEQFNPEQFTIEQAKSNAIKSIEDAIQHMIDEIKARTDLTDKEKQEAIAKLNQLKEQAIQAIQRAQSIDEISEQLEQFKAQMKAANPTAKELAKRKQEAISRIKDFSNEKINSIRNSEIGTADEKQAAMNQINEIVLETIRDINNAHTLQQVEAALNNGIARISAVQIVTSDRAKQSSSTGNESNSHLTIGYGTANHPFNSSTIGHKKKLDEDDDIDPLHMRHFSNNFGNVIKNAIGVVGISGLLASFWFFIAKRRRKEDEEEELEIRDNNKDSIKETLDDTKHLPLLFAKRRRKEDEEDVTVEEKDSLNNGESLDKVKHTPFFLPKRRRKEDEEDVEVTNENTDEKVLKDNEHSPLLFAKRRKDKEEDVETTTSIESKDEDVPLLLAKKKNQKDNQSKDKKSASKNTSKKVAAKKKKKKAKKNKK.

The segment covering 1–19 (MVQQSTTVAEAQGNEQKAN) has biased composition (polar residues). Residues 1–21 (MVQQSTTVAEAQGNEQKANNV) are disordered. FIVAR domains are found at residues 24–82 (AMDK…INQA), 150–208 (AMGN…VEQA), 276–334 (AMTQ…ITAA), 402–460 (AMTQ…IQQA), 528–586 (AMTN…VEQA), 654–712 (AMTQ…VAQA), 780–838 (AMGT…VTQA), 906–964 (AMSN…ITRA), 1032–1093 (AMDQ…ITNE), 1158–1216 (AMEL…VNGA), 1284–1342 (AMGN…VEQA), 1410–1467 (AMHG…INQA), 1535–1593 (LMDA…VSSA), 1661–1719 (AMEA…VEQL), 1787–1845 (AMQA…VEQL), 1913–1971 (AMET…VDQV), 2039–2093 (SMDQ…VDQA), 2161–2220 (AMDQ…VIKL), and 2415–2471 (AMET…INGA). A helical membrane pass occupies residues 3267-3289 (VIKNAIGVVGISGLLASFWFFIA). Residues 3365–3462 (RRKEDEEDVE…KKKKAKKNKK (98 aa)) form a disordered region. Basic and acidic residues-rich tracts occupy residues 3380 to 3390 (TDEKVLKDNEH) and 3429 to 3439 (QKDNQSKDKKS). Over residues 3444–3462 (TSKKVAAKKKKKKAKKNKK) the composition is skewed to basic residues.

Its subcellular location is the cell membrane. This Staphylococcus aureus (strain Newman) protein is Extracellular matrix-binding protein EbhA (ebhA).